The chain runs to 761 residues: Zinc finger protein 287 (761 aa).

An SCAN box domain is found at 49–131 (RQNFRNFPYP…TLVEDLTQIL (83 aa)). The disordered stretch occupies residues 134–154 (EAPQNSTLSQDTPEEDPRGKH). Residues 170–238 (MTFKDVAVDI…IKEILEGPSP (69 aa)) enclose the KRAB domain. C2H2-type zinc fingers lie at residues 368–390 (YKCN…QSTH), 396–418 (YECE…QRMH), 424–446 (YECH…QRIH), 452–474 (YKCD…QRTH), 480–502 (YKCL…QRVH), 508–530 (YICN…QKIH), 536–558 (YKCN…QRIH), 564–586 (YKCN…QTTH), 592–614 (YICN…HRTH), 620–642 (YKCS…QRIH), 648–670 (FKCN…QRIH), 676–698 (YKCN…QRTH), 704–726 (YKCN…QRIH), and 732–754 (YACR…QRVH).

It belongs to the krueppel C2H2-type zinc-finger protein family.

The protein resides in the nucleus. Functionally, may be involved in transcriptional regulation. The protein is Zinc finger protein 287 of Homo sapiens (Human).